A 523-amino-acid chain; its full sequence is Glycerate kinase (523 aa).

A Phosphoserine modification is found at serine 60. At lysine 200 the chain carries N6-acetyllysine.

The protein belongs to the glycerate kinase type-2 family.

It localises to the cytoplasm. It catalyses the reaction (R)-glycerate + ATP = (2R)-3-phosphoglycerate + ADP + H(+). In Rattus norvegicus (Rat), this protein is Glycerate kinase (Glyctk).